The chain runs to 220 residues: ATP-dependent dethiobiotin synthetase BioD (220 aa).

12–17 (DVGKTI) provides a ligand contact to ATP. A Mg(2+)-binding site is contributed by T16. K37 is an active-site residue. Residue T41 participates in substrate binding. Residues D49, 107-110 (EGAG), 167-168 (GS), and 197-199 (PAG) contribute to the ATP site. Residues D49 and E107 each coordinate Mg(2+).

This sequence belongs to the dethiobiotin synthetase family. As to quaternary structure, homodimer. Mg(2+) serves as cofactor.

It localises to the cytoplasm. The enzyme catalyses (7R,8S)-7,8-diammoniononanoate + CO2 + ATP = (4R,5S)-dethiobiotin + ADP + phosphate + 3 H(+). The protein operates within cofactor biosynthesis; biotin biosynthesis; biotin from 7,8-diaminononanoate: step 1/2. Functionally, catalyzes a mechanistically unusual reaction, the ATP-dependent insertion of CO2 between the N7 and N8 nitrogen atoms of 7,8-diaminopelargonic acid (DAPA, also called 7,8-diammoniononanoate) to form a ureido ring. In Corynebacterium efficiens (strain DSM 44549 / YS-314 / AJ 12310 / JCM 11189 / NBRC 100395), this protein is ATP-dependent dethiobiotin synthetase BioD.